The sequence spans 37 residues: Cytochrome b6-f complex subunit 5 (37 aa).

The chain crosses the membrane as a helical span at residues 5–25; sequence LLCGIVLGLVPVTIAGLFVTA.

It belongs to the PetG family. As to quaternary structure, the 4 large subunits of the cytochrome b6-f complex are cytochrome b6, subunit IV (17 kDa polypeptide, PetD), cytochrome f and the Rieske protein, while the 4 small subunits are PetG, PetL, PetM and PetN. The complex functions as a dimer.

It localises to the plastid. The protein resides in the chloroplast thylakoid membrane. In terms of biological role, component of the cytochrome b6-f complex, which mediates electron transfer between photosystem II (PSII) and photosystem I (PSI), cyclic electron flow around PSI, and state transitions. PetG is required for either the stability or assembly of the cytochrome b6-f complex. The chain is Cytochrome b6-f complex subunit 5 from Chlamydomonas reinhardtii (Chlamydomonas smithii).